The chain runs to 505 residues: Lysine--tRNA ligase (505 aa).

2 residues coordinate Mg(2+): Glu415 and Glu422.

The protein belongs to the class-II aminoacyl-tRNA synthetase family. Homodimer. Mg(2+) serves as cofactor.

It localises to the cytoplasm. It catalyses the reaction tRNA(Lys) + L-lysine + ATP = L-lysyl-tRNA(Lys) + AMP + diphosphate. In Salmonella typhi, this protein is Lysine--tRNA ligase.